A 155-amino-acid polypeptide reads, in one-letter code: MAAGSITTLPALPEDGGSSAFPPGHFKDPKRLYCKNGGFFLRIHPDGRVDGVREKSDPHIKLQLQAEERGVVSIKGVCANRYLAMKEDGRLLASKCVTDECFFFERLESNNYNTYRSRKYSSWYVALKRTGQYKLGPKTGPGQKAILFLPMSAKS.

A propeptide spanning residues 1 to 9 (MAAGSITTL) is cleaved from the precursor. The disordered stretch occupies residues 1–20 (MAAGSITTLPALPEDGGSSA). Heparin is bound at residue Asn-36. Positions 46-48 (DGR) match the Cell attachment site; atypical motif. Position 82 is a phosphotyrosine; by TEC (Tyr-82). A Cell attachment site; atypical motif is present at residues 88–90 (DGR). Residue Lys-95 forms a Glycyl lysine isopeptide (Lys-Gly) (interchain with G-Cter in SUMO1) linkage. Residues 128–144 (KRTGQYKLGPKTGPGQK) are heparin-binding.

Belongs to the heparin-binding growth factors family. Monomer. Homodimer. Interacts with FGFR1, FGFR2, FGFR3 and FGFR4. Affinity between fibroblast growth factors (FGFs) and their receptors is increased by heparan sulfate glycosaminoglycans that function as coreceptors. Interacts with CSPG4, FGFBP1 and TEC. Found in a complex with FGFBP1, FGF1 and FGF2. Interacts with FGFBP3. Interacts with integrin ITGAV:ITGB3; the interaction is required for FGF2 signaling. Interacts with SNORC (via the extracellular domain). Interacts with glypican GPC3. In terms of processing, phosphorylation at Tyr-82 regulates FGF2 unconventional secretion.

Its subcellular location is the secreted. The protein resides in the nucleus. Acts as a ligand for FGFR1, FGFR2, FGFR3 and FGFR4. Also acts as an integrin ligand which is required for FGF2 signaling. Binds to integrin ITGAV:ITGB3. Plays an important role in the regulation of cell survival, cell division, cell differentiation and cell migration. Functions as a potent mitogen in vitro. Can induce angiogenesis. Mediates phosphorylation of ERK1/2 and thereby promotes retinal lens fiber differentiation. The sequence is that of Fibroblast growth factor 2 (FGF2) from Ovis aries (Sheep).